Reading from the N-terminus, the 496-residue chain is Ankyrin repeat domain-containing protein 53 (496 aa).

The segment covering 1–15 (MASAGSTARRAGSGS) has biased composition (low complexity). Residues 1 to 66 (MASAGSTARR…RPSEESDQTT (66 aa)) form a disordered region. Positions 51-60 (AESKQPRPSE) are enriched in basic and acidic residues. 3 ANK repeats span residues 105 to 135 (KGFT…PVNL), 139 to 172 (NSQT…ALNA), and 176 to 205 (NGCT…NVHA). The segment at 292-320 (LVSNTKQARATALSKTPEQRGSQCSSSFH) is disordered.

As to quaternary structure, interacts with PSRC1; recruited by PSRC1 to the spindle during mitosis. In terms of processing, phosphorylated during mitosis.

The protein localises to the cytoplasm. It localises to the cytoskeleton. The protein resides in the spindle. It is found in the spindle pole. Functionally, required for normal progression through mitosis. Involved in chromosome alignment and cytokinesis via regulation of microtubules polymerization. The protein is Ankyrin repeat domain-containing protein 53 (ANKRD53) of Macaca fascicularis (Crab-eating macaque).